A 106-amino-acid polypeptide reads, in one-letter code: Large ribosomal subunit protein eL42 (106 aa).

Belongs to the eukaryotic ribosomal protein eL42 family.

The sequence is that of Large ribosomal subunit protein eL42 (RPL44) from Eremothecium gossypii (strain ATCC 10895 / CBS 109.51 / FGSC 9923 / NRRL Y-1056) (Yeast).